A 274-amino-acid chain; its full sequence is Energy-coupling factor transporter ATP-binding protein EcfA (274 aa).

In terms of domain architecture, ABC transporter spans 2-235; that stretch reads IRLENVSYNY…LSLRYLGLTP (234 aa). 35-42 is an ATP binding site; sequence GKNGSGKS.

This sequence belongs to the ABC transporter superfamily. Energy-coupling factor EcfA family. As to quaternary structure, forms a stable energy-coupling factor (ECF) transporter complex composed of 2 membrane-embedded substrate-binding proteins (S component), 2 ATP-binding proteins (A component) and 2 transmembrane proteins (T component).

The protein resides in the cell membrane. Functionally, ATP-binding (A) component of a common energy-coupling factor (ECF) ABC-transporter complex. Unlike classic ABC transporters this ECF transporter provides the energy necessary to transport a number of different substrates. In Methanosarcina acetivorans (strain ATCC 35395 / DSM 2834 / JCM 12185 / C2A), this protein is Energy-coupling factor transporter ATP-binding protein EcfA.